Reading from the N-terminus, the 351-residue chain is MLPDWISLDCAAPSESHRQAAMARQAQLTKPLGALGRLEEVAVELAALQATDHPGADRAPVVLFAGDHGIAAQGVSAYPPEVTVQMLRNFAGGGAAIAVLARHLNCPLEVVDVGTLASDAVPGVVADKTRRGTRDFSVAQALTPEEVAFACDAGRRALARQADHQPQLVIFGEMGIGNTTSAAAIAAALLSCAPVDIVGSGTGLDADGRAKKAAVIVAALARHGLTSDAAVADILAAVGGFEIIAMAGAMIAAAQRRWPVLVDGFIVSVAALAAVRLNPSCRTWLLFSHRSAERGHALVLDALGAHPLIDLDLRLGEASGAATALPIIRLACALHNGMATFAEAAVSGRDA.

The active-site Proton acceptor is Glu-317.

This sequence belongs to the CobT family.

The catalysed reaction is 5,6-dimethylbenzimidazole + nicotinate beta-D-ribonucleotide = alpha-ribazole 5'-phosphate + nicotinate + H(+). It participates in nucleoside biosynthesis; alpha-ribazole biosynthesis; alpha-ribazole from 5,6-dimethylbenzimidazole: step 1/2. Functionally, catalyzes the synthesis of alpha-ribazole-5'-phosphate from nicotinate mononucleotide (NAMN) and 5,6-dimethylbenzimidazole (DMB). The polypeptide is Nicotinate-nucleotide--dimethylbenzimidazole phosphoribosyltransferase (Bradyrhizobium sp. (strain BTAi1 / ATCC BAA-1182)).